We begin with the raw amino-acid sequence, 72 residues long: Large ribosomal subunit protein bL31 (72 aa).

The protein belongs to the bacterial ribosomal protein bL31 family. Type A subfamily. Part of the 50S ribosomal subunit.

Functionally, binds the 23S rRNA. The sequence is that of Large ribosomal subunit protein bL31 from Deinococcus deserti (strain DSM 17065 / CIP 109153 / LMG 22923 / VCD115).